A 128-amino-acid chain; its full sequence is Large ribosomal subunit protein eL22 (128 aa).

The protein belongs to the eukaryotic ribosomal protein eL22 family. In terms of assembly, component of the large ribosomal subunit.

It localises to the cytoplasm. Component of the large ribosomal subunit. The ribosome is a large ribonucleoprotein complex responsible for the synthesis of proteins in the cell. The sequence is that of Large ribosomal subunit protein eL22 (rpl22) from Xenopus tropicalis (Western clawed frog).